We begin with the raw amino-acid sequence, 110 residues long: uncharacterized protein (110 aa).

The N-terminal stretch at 1–16 is a signal peptide; sequence MKKILLIASMTAGLTA. The N-palmitoyl cysteine moiety is linked to residue Cys-17. Cys-17 carries S-diacylglycerol cysteine lipidation.

It is found in the cell membrane. This is an uncharacterized protein from Salmonella typhimurium (strain LT2 / SGSC1412 / ATCC 700720).